The sequence spans 238 residues: Protein shisa-3 homolog (238 aa).

Residues 1–21 form the signal peptide; the sequence is MGALLAFCLLVGLLRWGPAGA. Residues 22–98 lie on the Lumenal side of the membrane; it reads QQPGEYCHGW…GITAQPVYVP (77 aa). The chain crosses the membrane as a helical span at residues 99–119; the sequence is FLIVGSIFIAFIILGSLVAIY. Over 120–238 the chain is Cytoplasmic; it reads CCTCLRPKEP…GKSCPDFSSS (119 aa).

The protein belongs to the shisa family.

The protein resides in the endoplasmic reticulum membrane. In terms of biological role, plays an essential role in the maturation of presomitic mesoderm cells by individual attenuation of both FGF and WNT signaling. This Mus musculus (Mouse) protein is Protein shisa-3 homolog (Shisa3).